Consider the following 475-residue polypeptide: Ankyrin repeat, SAM and basic leucine zipper domain-containing protein 1 (475 aa).

Residues 1–10 show a composition bias toward low complexity; that stretch reads MAAGRLRGLA. A disordered region spans residues 1–24; that stretch reads MAAGRLRGLAVAGGGESSESDDDG. Residues Ser-17, Ser-18, and Ser-20 each carry the phosphoserine modification. ANK repeat units follow at residues 45 to 74, 78 to 107, 110 to 144, 148 to 177, 181 to 210, and 214 to 243; these read EKNE…SVDS, YGWT…NANF, DKQT…DPNV, RLMT…EVNT, SGYT…DKML, and DGNI…PLKG. The SAM domain occupies 272 to 334; sequence SYTAFGDLEV…KILAALKELD (63 aa).

As to quaternary structure, interacts with DDX4, PIWIL1, RANBP9 and TDRD1.

It is found in the cytoplasm. Plays a central role during spermatogenesis by repressing transposable elements and preventing their mobilization, which is essential for the germline integrity. Acts via the piRNA metabolic process, which mediates the repression of transposable elements during meiosis by forming complexes composed of piRNAs and Piwi proteins and governs the methylation and subsequent repression of transposons. Its association with pi-bodies suggests a participation in the primary piRNAs metabolic process. Required prior to the pachytene stage to facilitate the production of multiple types of piRNAs, including those associated with repeats involved in the regulation of retrotransposons. May act by mediating protein-protein interactions during germ cell maturation. This chain is Ankyrin repeat, SAM and basic leucine zipper domain-containing protein 1 (ASZ1), found in Carollia perspicillata (Seba's short-tailed bat).